A 186-amino-acid polypeptide reads, in one-letter code: Lipid A palmitoyltransferase PagP (186 aa).

The first 25 residues, 1-25 (MNVSKYVAIFSFVFIQLISVGKVFA), serve as a signal peptide directing secretion. Catalysis depends on residues His-58, Asp-101, and Ser-102.

Belongs to the lipid A palmitoyltransferase family. In terms of assembly, homodimer.

It localises to the cell outer membrane. The catalysed reaction is lipid A (E. coli) + a 1-hexadecanoyl-2-acyl-sn-glycero-3-phosphocholine = hepta-acyl lipid A (E. coli) + a 2-acyl-sn-glycero-3-phosphocholine. It carries out the reaction lipid IIA + a 1-hexadecanoyl-2-acyl-sn-glycero-3-phosphocholine = lipid IIB + a 2-acyl-sn-glycero-3-phosphocholine. It catalyses the reaction lipid IVA (E. coli) + a 1-hexadecanoyl-2-acyl-sn-glycero-3-phosphocholine = lipid IVB (E. coli) + a 2-acyl-sn-glycero-3-phosphocholine. Its function is as follows. Transfers a palmitate residue from the sn-1 position of a phospholipid to the N-linked hydroxymyristate on the proximal unit of lipid A or its precursors. The protein is Lipid A palmitoyltransferase PagP of Escherichia coli O157:H7.